A 310-amino-acid polypeptide reads, in one-letter code: MWSEYSLEVVDAVARNGSFSAAAQELHRVPSAVSYTVRQLEEWLAVPLFERRHRDVELTAAGAWFLKEGRSVVKKMQITRQQCQQIANGWRGQLAIAVDNIVRPERTRQMIVDFYRHFDDVELLVFQEVFNGVWDALSDGRVELAIGATRAIPVGGRYAFRDMGMLSWSCVVASHHPLALMDGPFSDDTLRNWPSLVREDTSRTLPKRITWLLDNQKRVVVPDWESSATCISAGLCIGMVPTHFAKPWLNEGKWVALELENPFPDSACCLTWQQNDMSPALTWLLEYLGDSETLNKEWLREPEETPATGD.

One can recognise an HTH lysR-type domain in the interval 2–59; it reads WSEYSLEVVDAVARNGSFSAAAQELHRVPSAVSYTVRQLEEWLAVPLFERRHRDVELT. Positions 19-38 form a DNA-binding region, H-T-H motif; that stretch reads FSAAAQELHRVPSAVSYTVR.

Belongs to the LysR transcriptional regulatory family.

It localises to the cytoplasm. Its function is as follows. Transcriptional regulator that activates the expression of punC, which encodes a purine nucleoside transporter. In Escherichia coli O157:H7, this protein is HTH-type transcriptional regulator PunR.